A 383-amino-acid polypeptide reads, in one-letter code: ATP phosphoribosyltransferase regulatory subunit (383 aa).

It belongs to the class-II aminoacyl-tRNA synthetase family. HisZ subfamily. Heteromultimer composed of HisG and HisZ subunits.

It is found in the cytoplasm. It functions in the pathway amino-acid biosynthesis; L-histidine biosynthesis; L-histidine from 5-phospho-alpha-D-ribose 1-diphosphate: step 1/9. In terms of biological role, required for the first step of histidine biosynthesis. May allow the feedback regulation of ATP phosphoribosyltransferase activity by histidine. This is ATP phosphoribosyltransferase regulatory subunit from Lactiplantibacillus plantarum (strain ATCC BAA-793 / NCIMB 8826 / WCFS1) (Lactobacillus plantarum).